A 217-amino-acid polypeptide reads, in one-letter code: Non-structural protein NS3 (217 aa).

This sequence belongs to the orbivirus NS3 family.

May play a role in the release of virions from infected cells. The chain is Non-structural protein NS3 (Segment-10) from Camelus dromedarius (Dromedary).